A 162-amino-acid polypeptide reads, in one-letter code: 2-C-methyl-D-erythritol 2,4-cyclodiphosphate synthase (162 aa).

A divalent metal cation contacts are provided by Asp-10 and His-12. 4-CDP-2-C-methyl-D-erythritol 2-phosphate contacts are provided by residues 10–12 and 36–37; these read DVH and HS. His-44 is an a divalent metal cation binding site. Residues 58–60, 63–67, and Arg-144 each bind 4-CDP-2-C-methyl-D-erythritol 2-phosphate; these read DIG and FSDTD.

It belongs to the IspF family. Homotrimer. Requires a divalent metal cation as cofactor.

The enzyme catalyses 4-CDP-2-C-methyl-D-erythritol 2-phosphate = 2-C-methyl-D-erythritol 2,4-cyclic diphosphate + CMP. It functions in the pathway isoprenoid biosynthesis; isopentenyl diphosphate biosynthesis via DXP pathway; isopentenyl diphosphate from 1-deoxy-D-xylulose 5-phosphate: step 4/6. Its function is as follows. Involved in the biosynthesis of isopentenyl diphosphate (IPP) and dimethylallyl diphosphate (DMAPP), two major building blocks of isoprenoid compounds. Catalyzes the conversion of 4-diphosphocytidyl-2-C-methyl-D-erythritol 2-phosphate (CDP-ME2P) to 2-C-methyl-D-erythritol 2,4-cyclodiphosphate (ME-CPP) with a corresponding release of cytidine 5-monophosphate (CMP). The polypeptide is 2-C-methyl-D-erythritol 2,4-cyclodiphosphate synthase (Burkholderia mallei (strain NCTC 10247)).